An 841-amino-acid chain; its full sequence is Alpha-glucuronidase A (841 aa).

The first 20 residues, 1 to 20 (MRGSNLFQLTLALLLSLVAA), serve as a signal peptide directing secretion. Asparagine 51, asparagine 76, asparagine 149, asparagine 222, asparagine 279, asparagine 310, asparagine 343, asparagine 450, asparagine 465, asparagine 527, asparagine 576, asparagine 682, asparagine 723, and asparagine 732 each carry an N-linked (GlcNAc...) asparagine glycan.

It belongs to the glycosyl hydrolase 67 family.

It localises to the secreted. The catalysed reaction is an alpha-D-glucuronoside + H2O = D-glucuronate + an alcohol. Its function is as follows. Alpha-glucuronidase involved in the hydrolysis of xylan, a major structural heterogeneous polysaccharide found in plant biomass representing the second most abundant polysaccharide in the biosphere, after cellulose. Releases 4-O-methylglucuronic acid from xylan. The polypeptide is Alpha-glucuronidase A (aguA) (Aspergillus tubingensis).